Reading from the N-terminus, the 128-residue chain is Large ribosomal subunit protein bL17 (128 aa).

The protein belongs to the bacterial ribosomal protein bL17 family. In terms of assembly, part of the 50S ribosomal subunit. Contacts protein L32.

The protein is Large ribosomal subunit protein bL17 of Baumannia cicadellinicola subsp. Homalodisca coagulata.